We begin with the raw amino-acid sequence, 276 residues long: Beta-lactamase OXA-1 (276 aa).

The first 25 residues, 1 to 25 (MKNTIHINFAIFLIIANIIYSSASA), serve as a signal peptide directing secretion. Catalysis depends on Ser71, which acts as the Acyl-ester intermediate. The a beta-lactam site is built by Ser71, Lys74, Ser118, Thr216, and Ala218. Lys74 is subject to N6-carboxylysine.

Belongs to the class-D beta-lactamase family. Monomer.

It localises to the periplasm. The catalysed reaction is a beta-lactam + H2O = a substituted beta-amino acid. With respect to regulation, inhibited by penicillin sulfones. Only weakly inhibited by clavulanic acid and sulbactam. Functionally, class D beta-lactamase which confers resistance to the beta-lactam antibiotics, including amoxicillin and ticarcillin. Acts via hydrolysis of the beta-lactam ring. Has penicillin- and cephalosporin-hydrolyzing activities. The sequence is that of Beta-lactamase OXA-1 from Escherichia coli.